The sequence spans 900 residues: Exosome complex component 10 homolog (900 aa).

Disordered stretches follow at residues 1–31 (MPRTPKRVHQEAKEESAQADQPPKKSASEDV) and 147–174 (TSIEPAVASPQTQGTPKAGSWNRTTGTP). Residues 8-28 (VHQEAKEESAQADQPPKKSAS) show a composition bias toward basic and acidic residues. The 166-residue stretch at 273–438 (VVDTVEKLKQ…YVYGRMTNDL (166 aa)) folds into the 3'-5' exonuclease domain. Mg(2+) is bound by residues D296, E298, D354, and D423. The 81-residue stretch at 485–565 (DNRQLYALRG…LKARDQPLVK (81 aa)) folds into the HRDC domain. The segment at 731 to 900 (EQLKRKHPQA…FSNVRKEGKK (170 aa)) is disordered. The span at 809–826 (RKQKKNQFQRGFKAKNRG) shows a compositional bias: basic residues. Residues 878–887 (NNRNNKQFNK) show a composition bias toward low complexity.

It belongs to the exosome component 10/RRP6 family. As to quaternary structure, component of the RNA exosome complex. Interacts with spn-A/Rad51; the interaction is required for the recruitment of spn-A to the DNA-damage response foci. Interacts with Su(var)3-9, a heterochromatin factor; the interaction promotes association of Rrp6 with a subset of genomic loci. Interacts with Su(var)205, a heterochromatin factor. Interacts with HDAC1, a heterochromatin factor. Mg(2+) is required as a cofactor. Salivary gland (at protein level).

The protein resides in the nucleus. It localises to the chromosome. The protein localises to the cytoplasm. Its subcellular location is the cell cortex. It is found in the cytoskeleton. The protein resides in the microtubule organizing center. It localises to the centrosome. The protein localises to the spindle. Its subcellular location is the midbody. Its function is as follows. Catalytic component of the RNA exosome complex which has 3'-&gt;5' exoribonuclease activity and participates in a multitude of cellular RNA processing and degradation events. Degrades a large variety of non-coding RNAs that are processed by the exosome, such as pre-rRNAs and some small nucleolar RNAs (snoRNAs). Degrades transcripts derived from different types of heterochromatic repeats, such as subtelomeric minisatellites and simple gagaa repeats. Degrades transcripts derived from transposons and transposon fragments. Degrades chromatin-associated transcripts and contributes to the compaction of heterochromatin. Required for the efficient repair of DNA double-strand breaks via homologous recombination after irradiation. Required for cell proliferation and error-free mitosis. The chain is Exosome complex component 10 homolog from Drosophila melanogaster (Fruit fly).